Reading from the N-terminus, the 365-residue chain is Pituitary-specific positive transcription factor 1 (365 aa).

A 9aaTAD motif is present at residues 5–12; sequence AFSADSFT. The tract at residues 160 to 191 is disordered; it reads PAVLSEEPPLGGTKDLRLRSRPPDDPPDMDSP. Over residues 173-183 the composition is skewed to basic and acidic residues; the sequence is KDLRLRSRPPD. The region spanning 188–262 is the POU-specific domain; that stretch reads MDSPQIRELE…ILAKWLDEAE (75 aa). A DNA-binding region (homeobox) is located at residues 278 to 337; sequence KRKRRTTISLGAKEALERSFREKIKPSSQEIVRMAEGLHLEKEVVRVWFCNRRQREKRVK.

Belongs to the POU transcription factor family. Class-1 subfamily.

The protein resides in the nucleus. In terms of biological role, transcription factor that activates growth hormone and prolactin genes. Specifically binds to the consensus sequence 5'-TAAAT-3'. In Oncorhynchus keta (Chum salmon), this protein is Pituitary-specific positive transcription factor 1 (pou1f1).